A 90-amino-acid polypeptide reads, in one-letter code: MKNIKSLKVAAQAFTLRNLIHLYKMCHSGSHEVYIYSKKTMCKIKSLIELETFRMAHNEKEYLIVVEGTKASQLIEKFQNLIEPAEREAL.

This is an uncharacterized protein from Bacillus subtilis (strain 168).